The primary structure comprises 217 residues: Large ribosomal subunit protein uL3 (217 aa).

The segment at 137 to 160 (VSASHGSHRNHRKPGSIGASSTPS) is disordered.

It belongs to the universal ribosomal protein uL3 family. Part of the 50S ribosomal subunit. Forms a cluster with proteins L14 and L19.

In terms of biological role, one of the primary rRNA binding proteins, it binds directly near the 3'-end of the 23S rRNA, where it nucleates assembly of the 50S subunit. The protein is Large ribosomal subunit protein uL3 of Clavibacter sepedonicus (Clavibacter michiganensis subsp. sepedonicus).